The primary structure comprises 293 residues: MTKLPSDASAIKRVEANTSPEQVIELLKQDGVVVLKDFLDQATVQSFREEIKPAIDDFEGGPNFNPDGVKVDIGRGTKHVANLTAISKTYRHDILNNKWMHSILEPLFRPHFGDYWMNRGSVLHIEPGEPAQNLHRDDILYRVTKLRQPGDPDLMINILIAVTEFRDDNGATRFVPGSHVWDDTRGVPTPDQASSAALRPGDALLFVGSLWHGAGSNQSDAFRQGLLLCIHPCHFTPMESHLHVPRTIVESMTPQAQKMIGWRSGITQHDVPIWLAGDHKMEETMGLRSQEVQ.

Fe cation is bound by residues histidine 135, aspartate 137, and histidine 212.

Belongs to the PhyH family. As to quaternary structure, homodimer. Fe cation serves as cofactor.

It carries out the reaction chrodrimanin C + 2-oxoglutarate + O2 = verruculide A + succinate + CO2 + H2O. The catalysed reaction is chrodrimanin H + 2-oxoglutarate + O2 = chrodrimanin E + succinate + CO2 + H2O. The protein operates within secondary metabolite biosynthesis; terpenoid biosynthesis. Dioxygenase; part of the gene cluster that mediates the biosynthesis of chrodrimanin B, a meroterpenoid that acts as a potent blocker of insect GABA-gated chloride channels. The first step of the pathway is the biosynthesis of 6-hydroxymellein by the polyketide synthase cdmE. The prenyltransferase cdmH acts as a 6-hydroxymellein 5-farnesyltransferase and produces the hydrophobic metabolite verruculide C. The FAD-dependent monooxygenase cdmI further converts verruculide C into verruculide B. The terpene cyclase cdmG then produced the pentacyclic molecule 3-hydroxypentacecilide A, the backbone structure of chrodrimanin B, via folding the farnesyl moiety of the substrate into the chair-boat conformation. The short-chain dehydrogenase/reductase cdmF functions as the 3-OH dehydrogenase that oxidizes the C-3 hydroxyl group of 3-hydroxypentacecilide A and produces chrodrimanin C, the dehydrogenated product of 3-hydroxypentacecilide A. The cytochrome P450 monooxygenase cdmJ then accepts both 3-hydroxypentacecilide A and chrodrimanin C and functions as a C-7-beta-hydroxylase to produce respectively chrodrimanin H and chrodrimanin F. The dioxygenase cdmA accepts chrodrimanin H to afford chrodrimanin E, which is further transformed to chrodrimanin A by the dioxygenase cdmD. CdmA can also accept chrodrimanin C as substrate to convert it into verruculide A, which is further converted into chrodrimanin T by cdmD. The last step of the biosynthesis is proposed to be performed by the acetyltransferase cdmC which acetylates chrodrimanin A to yield chrodrimanin B. The pathway may also lead to the production of additional shunt products, including chrodrimanins T and U. The chain is Dioxygenase cdmA from Talaromyces verruculosus (Penicillium verruculosum).